The primary structure comprises 72 residues: UPF0154 protein BLi02038/BL02936 (72 aa).

Residues 4–24 (WVVILVGVLALLAGVALGFFI) form a helical membrane-spanning segment.

Belongs to the UPF0154 family.

The protein localises to the cell membrane. This chain is UPF0154 protein BLi02038/BL02936, found in Bacillus licheniformis (strain ATCC 14580 / DSM 13 / JCM 2505 / CCUG 7422 / NBRC 12200 / NCIMB 9375 / NCTC 10341 / NRRL NRS-1264 / Gibson 46).